The chain runs to 714 residues: SEC14 domain and spectrin repeat-containing protein 1 (714 aa).

In terms of domain architecture, CRAL-TRIO spans 1–153 (MEASCILPVL…EFGGSLLYDH (153 aa)). Spectrin repeat units follow at residues 275-381 (SQLE…NVLQ), 384-497 (YEFH…LKML), and 503-605 (FKCE…HRLE). The tract at residues 691–714 (EAEQRLEEEEEEEEAALEVEPRES) is disordered. Acidic residues predominate over residues 696-707 (LEEEEEEEEAAL).

Belongs to the SOLO family.

In terms of biological role, may act as the primary docking protein directing membrane turnover and assembly of the transient receptor potential channels trpc4 and trpc5. Binds phospholipids. This is SEC14 domain and spectrin repeat-containing protein 1 (sestd1) from Danio rerio (Zebrafish).